Consider the following 151-residue polypeptide: Myosin light polypeptide 6 (151 aa).

Residue Cys2 is modified to N-acetylcysteine. The region spanning 7 to 42 (DQTAEFKEAFQLFDRTGDGKILYSQCGDVMRALGQN) is the EF-hand 1 domain. Residue Ser57 is modified to Phosphoserine. Lys81 is subject to N6-acetyllysine. 2 EF-hand domains span residues 84–119 (GTYEDYVEGLRVFDKEGNGTVMGAEIRHVLVTLGEK) and 119–151 (KMTEEEVEMLVAGHEDSNGCINYEELLRMVLNG).

In terms of assembly, myosin is a hexamer of 2 heavy chains and 4 light chains. Interacts with SPATA6.

Functionally, regulatory light chain of myosin. Does not bind calcium. This is Myosin light polypeptide 6 (Myl6) from Rattus norvegicus (Rat).